An 802-amino-acid chain; its full sequence is Aldehyde dehydrogenase family 16 member A1 (802 aa).

This sequence belongs to the aldehyde dehydrogenase family. Interacts with SPG21.

This is Aldehyde dehydrogenase family 16 member A1 (Aldh16a1) from Mus musculus (Mouse).